Consider the following 176-residue polypeptide: NAD(P)H-quinone oxidoreductase subunit I, chloroplastic (176 aa).

4Fe-4S ferredoxin-type domains follow at residues 55–84 (GRIHFEFDKCIACEVCVRVCPINLPVVNWE) and 95–124 (QTYSIDFGVCIFCGNCVEYCPTNCLSMTEE). Residues Cys64, Cys67, Cys70, Cys74, Cys104, Cys107, Cys110, and Cys114 each contribute to the [4Fe-4S] cluster site.

This sequence belongs to the complex I 23 kDa subunit family. NDH is composed of at least 16 different subunits, 5 of which are encoded in the nucleus. [4Fe-4S] cluster serves as cofactor.

It localises to the plastid. The protein localises to the chloroplast thylakoid membrane. It catalyses the reaction a plastoquinone + NADH + (n+1) H(+)(in) = a plastoquinol + NAD(+) + n H(+)(out). The catalysed reaction is a plastoquinone + NADPH + (n+1) H(+)(in) = a plastoquinol + NADP(+) + n H(+)(out). Functionally, NDH shuttles electrons from NAD(P)H:plastoquinone, via FMN and iron-sulfur (Fe-S) centers, to quinones in the photosynthetic chain and possibly in a chloroplast respiratory chain. The immediate electron acceptor for the enzyme in this species is believed to be plastoquinone. Couples the redox reaction to proton translocation, and thus conserves the redox energy in a proton gradient. The protein is NAD(P)H-quinone oxidoreductase subunit I, chloroplastic of Mesostigma viride (Green alga).